The following is a 92-amino-acid chain: MIGIPAKYFEIGVVIDSTFIIMSLLLRKSKRQRENSFDLRKHGRLLGLYLIIASASALIVSHLALYTNYMNYLTGLSLNAFLFYLGLRCLHV.

This is an uncharacterized protein from Sulfolobus spindle-shape virus 1 (SSV1).